Here is a 580-residue protein sequence, read N- to C-terminus: MSRQSSVSFRSGGSRSFSAASAITPSVSRTSFSSVSRSGGGGGGRISLGGACGAGGYGSRSLYNVGGSKRISYSSGGGSFRNQFGAGGFGFGGGAGSGFGFGGGAGSGFGFGGGAGFGGGYGGAGFPVCPPGGIQEVTVNQNLLTPLNLQIDPTIQRVRTEEREQIKTLNNKFASFIDKVRFLEQQNKVLDTKWALLQEQGTKTIKQNLDPLFEQYINNLRRQLDGVLGERGRLDSELRNMQDLVEDYKNKYEDEINKRTTAENEFVMLKKDVDAAYMNKVELEARVDALMDEINFMKMFFDAELSQMQTHVSDTSVVLSMDNNRSLDLDSIIAEVKAQYEDIANRSRTEAESWYQTKYEELQQTAGRHGDDLRNTKHEISEMNRMIQRLRSEIDNVKKQCANLQNAIAEAEQRGELALKDARNKLTELEEALQKAKQDMARLLREYQELMNTKLALDVEIATYRKLLEGEECRLSGEGVGPVNISVVTNSVSSGYGGGSSIGVGSGFGGGLGSGFAGGLGPRFTRGGGGLGLGSGLSVGGSGFSAGSSQGGMSFGSGGGSGSSVKFVSTTSSSRRSFKS.

Residues 1–161 form a head region; the sequence is MSRQSSVSFR…DPTIQRVRTE (161 aa). Residues S5, S8, S16, and S21 each carry the phosphoserine modification. Residue T24 is modified to Phosphothreonine; by CDK1. A phosphoserine mark is found at S26, S36, S47, S61, S68, S72, S75, and S79. T145 carries the phosphothreonine; by CDK1 modification. Residue T160 is modified to Phosphothreonine; by AURKB. Residues 162 to 197 form a coil 1A region; that stretch reads EREQIKTLNNKFASFIDKVRFLEQQNKVLDTKWALL. An IF rod domain is found at 162–475; that stretch reads EREQIKTLNN…KLLEGEECRL (314 aa). Residues 198 to 216 form a linker 1 region; sequence QEQGTKTIKQNLDPLFEQY. The interval 217–309 is coil 1B; it reads INNLRRQLDG…FFDAELSQMQ (93 aa). A linker 12 region spans residues 310–332; that stretch reads THVSDTSVVLSMDNNRSLDLDSI. The tract at residues 333 to 471 is coil 2; that stretch reads IAEVKAQYED…ATYRKLLEGE (139 aa). The interval 472–580 is tail; sequence ECRLSGEGVG…TSSSRRSFKS (109 aa). At R526 the chain carries Omega-N-methylarginine. A disordered region spans residues 555–580; that stretch reads FGSGGGSGSSVKFVSTTSSSRRSFKS. The segment covering 563 to 580 has biased composition (low complexity); the sequence is SSVKFVSTTSSSRRSFKS.

Belongs to the intermediate filament family. Heterodimer of a type I and a type II keratin. Heterodimer with type I keratin KRT25 leading to the formation of keratin intermediate filament (KIF) network. Forms a heterodimer (via 2B domains) with KRT14 (via 2B domains). Interacts with PLEC isoform 1C, when in a heterodimer with KRT14. Interacts with TCHP. Interacts with EPPK1. Interacts with AMELX. Interacts with PKP1 (via N-terminus) and PKP2. In terms of processing, phosphorylated by CDK1, AURKB and Rho-kinase, phosphorylation is regulated by the cell cycle. Thr-24 phosphorylation, mediated by CDK1, peaks during prometaphase or metaphase cells with phosphorylated filamentous structures evident throughout the cytoplasm during early mitosis. CDK1 phosphorylates Thr-24 in mitotic cells at the site of injury. Post-translationally, O-glycosylated. Expressed in the corneal epithelium (at protein level). Expressed in the epidermis of the ear (at protein level). Expressed in the basal and spinous layers of the skin at birth (at protein level).

It is found in the cytoplasm. Required for the formation of keratin intermediate filaments in the basal epidermis and maintenance of the skin barrier in response to mechanical stress. Regulates the recruitment of Langerhans cells to the epidermis, potentially by modulation of the abundance of macrophage chemotactic cytokines, macrophage inflammatory cytokines and CTNND1 localization in keratinocytes. This chain is Keratin, type II cytoskeletal 5, found in Mus musculus (Mouse).